A 364-amino-acid polypeptide reads, in one-letter code: Dihydroorotase (364 aa).

Positions 14, 16, 98, 137, 180, and 258 each coordinate Zn(2+). Lys-98 is modified (N6-carboxylysine).

The protein belongs to the metallo-dependent hydrolases superfamily. DHOase family. Class II DHOase subfamily. It depends on Zn(2+) as a cofactor.

The enzyme catalyses (S)-dihydroorotate + H2O = N-carbamoyl-L-aspartate + H(+). Its pathway is pyrimidine metabolism; UMP biosynthesis via de novo pathway; (S)-dihydroorotate from bicarbonate: step 3/3. In terms of biological role, catalyzes the conversion of ureidosuccinic acid (USA) to dihydroorotate, the third step of the de novo pyrimidine biosynthetic pathway. This Saccharomyces cerevisiae (strain ATCC 204508 / S288c) (Baker's yeast) protein is Dihydroorotase (URA4).